The primary structure comprises 275 residues: 3-methyl-2-oxobutanoate hydroxymethyltransferase (275 aa).

Mg(2+) contacts are provided by Asp44 and Asp83. 3-methyl-2-oxobutanoate-binding positions include 44–45 (DS), Asp83, and Lys113. Residue Glu115 participates in Mg(2+) binding. The active-site Proton acceptor is the Glu182.

This sequence belongs to the PanB family. Homodecamer; pentamer of dimers. Mg(2+) is required as a cofactor.

Its subcellular location is the cytoplasm. It carries out the reaction 3-methyl-2-oxobutanoate + (6R)-5,10-methylene-5,6,7,8-tetrahydrofolate + H2O = 2-dehydropantoate + (6S)-5,6,7,8-tetrahydrofolate. Its pathway is cofactor biosynthesis; (R)-pantothenate biosynthesis; (R)-pantoate from 3-methyl-2-oxobutanoate: step 1/2. In terms of biological role, catalyzes the reversible reaction in which hydroxymethyl group from 5,10-methylenetetrahydrofolate is transferred onto alpha-ketoisovalerate to form ketopantoate. The chain is 3-methyl-2-oxobutanoate hydroxymethyltransferase from Clostridium botulinum (strain 657 / Type Ba4).